We begin with the raw amino-acid sequence, 463 residues long: Mitochondrial dynamics protein MID51 (463 aa).

The Mitochondrial intermembrane segment spans residues 1 to 23 (MAGAGERKGKKDDNGIGTAIDFV). Residues 24-46 (LSNARLVLGVGGAAMLGIATLAV) traverse the membrane as a helical segment. Over 47 to 463 (KRMYDRAISA…LSEPEVLLQT (417 aa)) the chain is Cytoplasmic. The dimerization stretch occupies residues 49–195 (MYDRAISAPT…LSGSLYDDLQ (147 aa)). Residues Ser55, Ser59, Ser79, and Ser94 each carry the phosphoserine modification. The tract at residues 57-77 (PTSPTRLSHSGKRSWEEPNWM) is disordered. Positions 160–169 (AAVDICAELR) are important for interaction with DNM1L. ADP contacts are provided by Ser187, Ser189, and His201. The tract at residues 234–243 (RRENPEYFPR) is important for interaction with DNM1L. Residues Ser340, Arg342, and Lys368 each contribute to the ADP site.

It belongs to the MID49/MID51 family. In terms of assembly, homodimer. Interacts with DNM1L.

It is found in the mitochondrion outer membrane. Mitochondrial outer membrane protein which regulates mitochondrial fission/fusion dynamics. Promotes the recruitment and association of the fission mediator dynamin-related protein 1 (DNM1L) to the mitochondrial surface independently of the mitochondrial fission FIS1 and MFF proteins. Regulates DNM1L GTPase activity and DNM1L oligomerization. Binds ADP and can also bind GDP, although with lower affinity. Does not bind CDP, UDP, ATP, AMP or GTP. Inhibits DNM1L GTPase activity in the absence of bound ADP. Requires ADP to stimulate DNM1L GTPase activity and the assembly of DNM1L into long, oligomeric tubules with a spiral pattern, as opposed to the ring-like DNM1L oligomers observed in the absence of bound ADP. Does not require ADP for its function in recruiting DNM1L. In Rattus norvegicus (Rat), this protein is Mitochondrial dynamics protein MID51 (Mief1).